The sequence spans 162 residues: Protein archease (162 aa).

Positions 34, 161, and 162 each coordinate Ca(2+).

Belongs to the archease family. In terms of assembly, component of the tRNA-splicing ligase complex.

Component of the tRNA-splicing ligase complex required to facilitate the enzymatic turnover of catalytic subunit RTCB. Together with ddx1, acts by facilitating the guanylylation of RTCB, a key intermediate step in tRNA ligation. The chain is Protein archease from Ictalurus punctatus (Channel catfish).